Reading from the N-terminus, the 105-residue chain is Large ribosomal subunit protein bL21 (105 aa).

It belongs to the bacterial ribosomal protein bL21 family. As to quaternary structure, part of the 50S ribosomal subunit. Contacts protein L20.

In terms of biological role, this protein binds to 23S rRNA in the presence of protein L20. In Rickettsia africae (strain ESF-5), this protein is Large ribosomal subunit protein bL21.